We begin with the raw amino-acid sequence, 86 residues long: Exodeoxyribonuclease 7 small subunit (86 aa).

This sequence belongs to the XseB family. Heterooligomer composed of large and small subunits.

The protein localises to the cytoplasm. The enzyme catalyses Exonucleolytic cleavage in either 5'- to 3'- or 3'- to 5'-direction to yield nucleoside 5'-phosphates.. Bidirectionally degrades single-stranded DNA into large acid-insoluble oligonucleotides, which are then degraded further into small acid-soluble oligonucleotides. In Xanthomonas oryzae pv. oryzae (strain MAFF 311018), this protein is Exodeoxyribonuclease 7 small subunit.